A 327-amino-acid chain; its full sequence is Ribose-phosphate pyrophosphokinase (327 aa).

ATP contacts are provided by residues 40–42 (DGE) and 99–100 (RQ). 2 residues coordinate Mg(2+): His134 and Asp173. The active site involves Lys196. Residues Arg198, Asp222, and 226-230 (DTANT) each bind D-ribose 5-phosphate.

The protein belongs to the ribose-phosphate pyrophosphokinase family. Class I subfamily. Homohexamer. Requires Mg(2+) as cofactor.

It is found in the cytoplasm. It catalyses the reaction D-ribose 5-phosphate + ATP = 5-phospho-alpha-D-ribose 1-diphosphate + AMP + H(+). Its pathway is metabolic intermediate biosynthesis; 5-phospho-alpha-D-ribose 1-diphosphate biosynthesis; 5-phospho-alpha-D-ribose 1-diphosphate from D-ribose 5-phosphate (route I): step 1/1. Its function is as follows. Involved in the biosynthesis of the central metabolite phospho-alpha-D-ribosyl-1-pyrophosphate (PRPP) via the transfer of pyrophosphoryl group from ATP to 1-hydroxyl of ribose-5-phosphate (Rib-5-P). The chain is Ribose-phosphate pyrophosphokinase from Chromobacterium violaceum (strain ATCC 12472 / DSM 30191 / JCM 1249 / CCUG 213 / NBRC 12614 / NCIMB 9131 / NCTC 9757 / MK).